A 162-amino-acid polypeptide reads, in one-letter code: Phosphopantetheine adenylyltransferase (162 aa).

Residue Thr10 coordinates substrate. Residues 10–11 (TF) and His18 each bind ATP. 3 residues coordinate substrate: Lys42, Leu74, and Arg88. Residues 89 to 91 (GLR), Glu99, and 124 to 130 (FSCISST) contribute to the ATP site.

The protein belongs to the bacterial CoaD family. As to quaternary structure, homohexamer. The cofactor is Mg(2+).

It localises to the cytoplasm. The catalysed reaction is (R)-4'-phosphopantetheine + ATP + H(+) = 3'-dephospho-CoA + diphosphate. The protein operates within cofactor biosynthesis; coenzyme A biosynthesis; CoA from (R)-pantothenate: step 4/5. Functionally, reversibly transfers an adenylyl group from ATP to 4'-phosphopantetheine, yielding dephospho-CoA (dPCoA) and pyrophosphate. This Francisella philomiragia subsp. philomiragia (strain ATCC 25017 / CCUG 19701 / FSC 153 / O#319-036) protein is Phosphopantetheine adenylyltransferase.